We begin with the raw amino-acid sequence, 301 residues long: Coiled-coil domain-containing protein 69-B (301 aa).

The disordered stretch occupies residues 1–43 (MGSKTSKMCCPQLRKKKRQKAHKEGPSSQELNDLNAKSQGPNE). A lipid anchor (N-myristoyl glycine) is attached at G2. Positions 26–41 (PSSQELNDLNAKSQGP) are enriched in polar residues. Coiled-coil stretches lie at residues 42-167 (NELL…SILS) and 213-281 (KSTM…NLYR).

This sequence belongs to the CCDC69 family.

The protein resides in the cytoplasm. Its subcellular location is the cytoskeleton. It is found in the spindle. It localises to the midbody. May act as a scaffold to regulate the recruitment and assembly of spindle midzone components. The sequence is that of Coiled-coil domain-containing protein 69-B (ccdc69-b) from Xenopus laevis (African clawed frog).